The primary structure comprises 1137 residues: UDP-N-acetylglucosamine transferase subunit ALG13 (1137 aa).

Residues 1-125 (MKCVFVTVGT…LHKEGHLFYC (125 aa)) are glycosyltransferase activity. Positions 126–400 (TCRVLTCPGQ…GSKKNRNNAV (275 aa)) are deubiquitinase activity. In terms of domain architecture, OTU spans 231–352 (LFRKLTAKDA…SGHYDSVYSK (122 aa)). D239 acts as the For deubiquitinase activity in catalysis. The Nucleophile; for deubiquitinase activity role is filled by C242. H345 functions as the For deubiquitinase activity in the catalytic mechanism. In terms of domain architecture, Tudor spans 492-552 (QYYLGDKCQV…KPVTQVMSVP (61 aa)). Disordered stretches follow at residues 641-660 (HFHPQHPSPRQGRGYGMPRN) and 911-974 (IPHA…SGSD). 2 stretches are compositionally biased toward pro residues: residues 918–946 (LPPPPPPPPPPPPPPPPPPPPPPPPPPPA) and 956–967 (QPPPPLPPPPYS).

Belongs to the glycosyltransferase 28 family. In terms of assembly, forms with ALG14 the active heterodimeric UDP-N-acetylglucosamine transferase complex. As to quaternary structure, not able to interact with ALG14 to form an active UDP-N-acetylglucosamine transferase complex.

The protein resides in the endoplasmic reticulum membrane. The catalysed reaction is an N-acetyl-alpha-D-glucosaminyl-diphospho-di-trans,poly-cis-dolichol + UDP-N-acetyl-alpha-D-glucosamine = an N,N'-diacetylchitobiosyl-diphospho-di-trans,poly-cis-dolichol + UDP + H(+). It functions in the pathway protein modification; protein glycosylation. In terms of biological role, catalytic subunit of the UDP-N-acetylglucosamine transferase complex that operates in the biosynthetic pathway of dolichol-linked oligosaccharides, the glycan precursors employed in protein asparagine (N)-glycosylation. The assembly of dolichol-linked oligosaccharides begins on the cytosolic side of the endoplasmic reticulum membrane and finishes in its lumen. The sequential addition of sugars to dolichol pyrophosphate produces dolichol-linked oligosaccharides containing fourteen sugars, including two GlcNAcs, nine mannoses and three glucoses. Once assembled, the oligosaccharide is transferred from the lipid to nascent proteins by oligosaccharyltransferases. On the cytoplasmic face of the endoplasmic reticulum, the dimeric ALG13/ALG14 complex catalyzes the second step of dolichol pyrophosphate biosynthesis, transferring a beta1,4-linked N-acetylglucosamine (GlcNAc) from UDP-GlcNAc to GlcNAc-pyrophosphatedolichol (Gn-PDol) to produce N,N'-diacetylchitobiosyl diphosphodolichol. N,N'-diacetylchitobiosyl diphosphodolichol is a substrate for ALG1, the following enzyme in the biosynthetic pathway. Functionally, no glycosyltransferase or deubiquitinase activity is detected for this potential multifunctional enzyme. This chain is UDP-N-acetylglucosamine transferase subunit ALG13, found in Homo sapiens (Human).